A 130-amino-acid polypeptide reads, in one-letter code: Glycine cleavage system H protein (130 aa).

The Lipoyl-binding domain maps to 22–103 (KAYIGISDCA…PYGSWIAAIE (82 aa)). An N6-lipoyllysine modification is found at Lys63.

Belongs to the GcvH family. As to quaternary structure, the glycine cleavage system is composed of four proteins: P, T, L and H. Requires (R)-lipoate as cofactor.

In terms of biological role, the glycine cleavage system catalyzes the degradation of glycine. The H protein shuttles the methylamine group of glycine from the P protein to the T protein. This chain is Glycine cleavage system H protein, found in Clostridium botulinum (strain Okra / Type B1).